Reading from the N-terminus, the 1039-residue chain is Potassium-transporting ATPase alpha chain 2 (1039 aa).

Over 1 to 102 the chain is Cytoplasmic; it reads MHQKTPEIYS…NSLTPPKQTP (102 aa). The chain crosses the membrane as a helical span at residues 103–123; the sequence is EIVKFLKQMVGGFSILLWVGA. Over 124–146 the chain is Lumenal; the sequence is FLCWIAYGIQYSSDKSASLNNVY. Residues 147–167 form a helical membrane-spanning segment; that stretch reads LGCVLGLVVILTGIFAYYQEA. Topologically, residues 168–303 are cytoplasmic; sequence KSTNIMSSFN…NEKTPIAIEI (136 aa). A helical membrane pass occupies residues 304–323; the sequence is EHFVHIVAGVAVSIGILFFI. Residues 324–335 are Lumenal-facing; sequence IAVSLKYQVLDS. The helical transmembrane segment at 336–353 threads the bilayer; that stretch reads IIFLIGIIVANVPEGLLA. Residues 354–787 are Cytoplasmic-facing; that stretch reads TVTVTLSLTA…EEGRLIFDNL (434 aa). The 4-aspartylphosphate intermediate role is filled by Asp-391. Mg(2+) is bound by residues Asp-732 and Asp-736. The helical transmembrane segment at 788–807 threads the bilayer; sequence KKTIAYSLTKNIAELCPFLI. At 808–817 the chain is on the lumenal side; it reads YIIVGLPLPI. A helical membrane pass occupies residues 818–838; that stretch reads GTITILFIDLGTDIIPSIALA. The Cytoplasmic portion of the chain corresponds to 839–858; the sequence is YEKAESDIMNRKPRHKNKDR. Residues 859–881 traverse the membrane as a helical segment; that stretch reads LVNQPLAVYSYLHIGLMQALGAF. Over 882–933 the chain is Lumenal; sequence LVYFTVYAQEGFLPRTLINLRVEWEKDYVNDLKDSYGQEWTRYQREYLEWTG. The chain crosses the membrane as a helical span at residues 934–953; it reads YTAFFVGILVQQIADLIIRK. The Cytoplasmic segment spans residues 954–967; it reads TRRNSIFQQGLFRN. Ser-958 carries the post-translational modification Phosphoserine; by PKA. A helical transmembrane segment spans residues 968 to 986; sequence KVIWVGITSQIIIGLILSY. The Lumenal segment spans residues 987–1001; that stretch reads GLGSVTALSFTMLRA. The helical transmembrane segment at 1002–1022 threads the bilayer; that stretch reads QYWFVAVPHAILIWVYDEVRK. Residues 1023–1039 are Cytoplasmic-facing; sequence LFIRLYPGSWWDKNMYY.

This sequence belongs to the cation transport ATPase (P-type) (TC 3.A.3) family. Type IIC subfamily. In terms of assembly, the ATPase pump is composed of a catalytic alpha subunit and an auxiliary non-catalytic beta subunit. The alpha subunit pairs with the beta subunit of gastric H(+)/K(+) ATPase ATP4B or the beta subunit of Na(+)/K(+) ATPases ATP1B1 and ATP1B3; this interaction is required for the formation of a functionally active pump and its targeting at the plasma membrane. As to expression, expressed in airway epithelial cells (at protein level). Found in skin and kidney. Detected in prostate basal cells (at protein level). Expression is increased in benign prostate hyperplasia and tumor tissues (at protein level).

The protein resides in the apical cell membrane. The catalysed reaction is K(+)(out) + ATP + H2O + H(+)(in) = K(+)(in) + ADP + phosphate + 2 H(+)(out). The enzyme catalyses K(+)(out) + Na(+)(in) + ATP + H2O = K(+)(in) + Na(+)(out) + ADP + phosphate + H(+). With respect to regulation, the ATPase activity is regulated by monovalent cations and pH. Up-regulated by K(+) ions in a dose-dependent way. Down-regulated by Na(+) ions. Inhibited by Na(+)/K(+)-ATPase inhibitor ouabain and H(+)/K(+)-ATPase inhibitor SCH-28080 with an intermediate sensitivity to completely resistant Na(+)/K(+)-ATPases and highly sensitive H(+)/K(+)-ATPases. The catalytic subunit of a H(+)/K(+) ATPase and/or Na(+)/K(+) ATPase pump which transports K(+) ions in exchange for Na(+) and/or H(+) ions across the apical membrane of epithelial cells. Uses ATP as an energy source to pump K(+) ions into the cell while transporting Na(+) and/or H(+) ions to the extracellular compartment. Involved in the maintenance of electrolyte homeostasis through K(+) ion absorption in kidney and colon. In the airway epithelium, may play a primary role in mucus acidification regulating its viscosity and clearance. The protein is Potassium-transporting ATPase alpha chain 2 of Homo sapiens (Human).